Here is a 630-residue protein sequence, read N- to C-terminus: MKEKHNPRRKYCLISGLAIIFSLWIIIGNGAKVQAETITVSTPIKQIFPDDAFAETIKDNLKKKSVTDAVTQNELNSIDQIIANNSDIKSVQGIQYLPNVTKLFLNGNKLTDIKPLTNLKNLGWLFLDENKIKDLSSLKDLKKLKSLSLEHNGISDINGLVHLPQLESLYLGNNKITDITVLSRLTKLDTLSLEDNQISDIVPLAGLTKLQNLYLSKNHISDLRALAGLKNLDVLELFSQECLNKPINHQSNLVVPNTVKNTDGSLVTPEIISDDGDYEKPNVKWHLPEFTNEVSFIFYQPVTIGKAKARFHGRVTQPLKEVYTVSYDVDGTVIKTKVEAGTRITAPKPPTKQGYVFKGWYTEKNGGHEWNFNTDYMSGNDFTLYAVFKAETTEKTVNLTRYVKYIRGNAGIYKLPREDNSLKQGTLASHRCKALTVDREARNGGKLWYRLKNIGWTKAENLSLDRYDKMEYDKGVTAYARVRNASGNSVWTKPYNTAGAKHVNKLSVYQGKNMRILREAKTPITTWYQFSIGGKVIGWVDTRALNTFYKQSMEKPTRLTRYVSANKAGESYYKVPVADNPVKRGTLAKYKNQKLIVDCQATIEGQLWYRIRTSSTFIGWTKAANLRAQK.

Residues 1-30 form the signal peptide; the sequence is MKEKHNPRRKYCLISGLAIIFSLWIIIGNG. The LRRNT domain maps to 31–76; that stretch reads AKVQAETITVSTPIKQIFPDDAFAETIKDNLKKKSVTDAVTQNELN. Ca(2+)-binding residues include proline 49, aspartate 51, glutamate 55, and aspartate 59. 7 LRR repeats span residues 75–97, 98–121, 123–141, 142–163, 164–187, 189–207, and 208–231; these read LNSIDQIIANNSDIKSVQGIQYL, PNVTKLFLNGNKLTDIKPLTNLKN, GWLFLDENKIKDLSSLKDL, KKLKSLSLEHNGISDINGLVHL, PQLESLYLGNNKITDITVLSRLTK, DTLSLEDNQISDIVPLAGL, and TKLQNLYLSKNHISDLRALAGLKN. The tract at residues 241–319 is ig-like region; it reads ECLNKPINHQ…RFHGRVTQPL (79 aa). The 90-residue stretch at 241–330 folds into the LRRCT domain; the sequence is ECLNKPINHQ…EVYTVSYDVD (90 aa). The segment at 320-392 is b repeat region; sequence KEVYTVSYDV…TLYAVFKAET (73 aa). GW domains are found at residues 393-467, 472-550, and 553-630; these read TEKT…LDRY, YDKG…TFYK, and MEKP…RAQK. Positions 399–630 are GW repeat region, necessary and sufficient for cell surface attachment, interacts with host C1QBP and with heparin; sequence LTRYVKYIRG…TKAANLRAQK (232 aa).

Belongs to the internalin family. Monomer. Interacts via its LRR repeats with the extracellular portion of mammalian host MET; MET can bind HGF, its endogenous ligand, and InlB simultaneously. Probably forms a dimer upon interaction with host MET, which subsequently allows dimerization of the host MET and subsequent host signaling; dimerization probably occurs via the convex surface of InlB. Interacts with host complement component 1 Q subcomponent-binding protein (C1QBP). Interacts in vitro with human intestinal mucin-2 (MUC2) but not with mucin-1. Ca(2+) is required as a cofactor.

Its subcellular location is the secreted. The protein localises to the cell surface. It localises to the cell membrane. Mediates the entry of L.monocytogenes into normally non-phagocytic mammalian host cells. Its host receptor is hepatocyte growth factor receptor (HGF receptor, a tyrosine kinase, MET) which is tyrosine-phosphorylated in response to InlB in human, green monkey, mouse and dog cell lines. Downstream adapter proteins GAB1 and CBL are phosphorylated in response to InlB, which also causes cell colony scattering. InlB binding to mammalian cells is saturable and inhibited by EDTA; InlB-coated beads can be taken up by host cells. Complement component 1 Q subcomponent-binding protein (gC1q-R, C1QBP) might act as an InlB receptor, leading to activation of PI3-kinase in green monkey cells. Stimulation of Tyr-phosphorylation by InlB is antagonized by C1QBP, showing that potentiation of MET signaling via the GW domains is not mediated by C1QBP; the exact role of C1QBP remains to be determined. Stimulation of Tyr-phosphorylation of MET by InlB is potentiated by the InlB GW domains and glycosaminoglycans such as heparin; exogenously added InlB, or hepatocyte growth factor (HGF) will also substitute for bacterial InlB, suggesting InlB promotes bacterial invasion by mimicking the hormone HGF. May stimulate phosphatidylinositol 4,5-bisphosphate 3-kinase (PI3-kinase) in green monkey cells, has less effect in humans as PI3-kinase is constitutively and highly expressed in Caco cells. Binds heparin; C1QBP and heparin seem to bind to the GW domains. The sequence is that of Internalin B (inlB) from Listeria monocytogenes serotype 1/2a (strain EGD / Mackaness).